Reading from the N-terminus, the 162-residue chain is Endoribonuclease YbeY (162 aa).

Zn(2+)-binding residues include His126, His130, and His136.

The protein belongs to the endoribonuclease YbeY family. Zn(2+) is required as a cofactor.

It is found in the cytoplasm. Functionally, single strand-specific metallo-endoribonuclease involved in late-stage 70S ribosome quality control and in maturation of the 3' terminus of the 16S rRNA. This Fusobacterium nucleatum subsp. nucleatum (strain ATCC 25586 / DSM 15643 / BCRC 10681 / CIP 101130 / JCM 8532 / KCTC 2640 / LMG 13131 / VPI 4355) protein is Endoribonuclease YbeY.